Consider the following 882-residue polypeptide: Alanine--tRNA ligase (882 aa).

Positions 570, 574, 672, and 676 each coordinate Zn(2+).

This sequence belongs to the class-II aminoacyl-tRNA synthetase family. Requires Zn(2+) as cofactor.

The protein localises to the cytoplasm. The enzyme catalyses tRNA(Ala) + L-alanine + ATP = L-alanyl-tRNA(Ala) + AMP + diphosphate. Functionally, catalyzes the attachment of alanine to tRNA(Ala) in a two-step reaction: alanine is first activated by ATP to form Ala-AMP and then transferred to the acceptor end of tRNA(Ala). Also edits incorrectly charged Ser-tRNA(Ala) and Gly-tRNA(Ala) via its editing domain. This is Alanine--tRNA ligase from Xanthomonas euvesicatoria pv. vesicatoria (strain 85-10) (Xanthomonas campestris pv. vesicatoria).